The primary structure comprises 1501 residues: Neither inactivation nor afterpotential protein C (1501 aa).

The 267-residue stretch at 16-282 (FEIYEEIAQG…MVEMVEHPFL (267 aa)) folds into the Protein kinase domain. ATP is bound by residues 22–30 (IAQGVNAKV) and lysine 45. Aspartate 145 (proton acceptor) is an active-site residue. Serine 183 is subject to Phosphoserine. One can recognise a Myosin motor domain in the interval 332 to 1037 (MYPEDLAALE…FLARLYELQV (706 aa)). The interval 913 to 934 (LTLLKMLSQNANLGVHFVRCIR) is actin-binding. 2 consecutive IQ domains span residues 1036 to 1065 (QVKKVIKVQSMMRALLARKRVKGGKVFKLG) and 1072 to 1101 (HDVAASKIQKAFRGFRDRVRLPPLVNEKSG). The interaction with rtp stretch occupies residues 1043 to 1271 (VQSMMRALLA…RMGESDNIYN (229 aa)). Residues 1066-1501 (KKGPEHHDVA…ITLSGYAVDI (436 aa)) are non alpha-helical, C-terminal domain. Disordered stretches follow at residues 1308 to 1364 (NWGV…DPVR) and 1390 to 1473 (KTNY…EDSN). The segment covering 1326–1335 (APPPPPPPMP) has biased composition (pro residues). Over residues 1336–1358 (SSNYYRNNPNQQQRNYQQRSSYP) the composition is skewed to low complexity. Residues 1405-1414 (NNRRGSDSGD) are compositionally biased toward basic and acidic residues. The segment covering 1449-1463 (FGQQQRAPTLRQSPA) has biased composition (polar residues).

The protein in the C-terminal section; belongs to the TRAFAC class myosin-kinesin ATPase superfamily. Myosin family. It in the N-terminal section; belongs to the protein kinase superfamily. Ser/Thr protein kinase family. As to quaternary structure, interacts with rtp. As to expression, expressed in the phototransducing compartment of photoreceptor cells, the rhabdomeres (at protein level).

It localises to the cytoplasm. The protein resides in the cytoskeleton. Its subcellular location is the nucleus. The protein localises to the membrane. It is found in the cell projection. It localises to the rhabdomere membrane. It catalyses the reaction L-seryl-[protein] + ATP = O-phospho-L-seryl-[protein] + ADP + H(+). The enzyme catalyses L-threonyl-[protein] + ATP = O-phospho-L-threonyl-[protein] + ADP + H(+). In terms of biological role, required for photoreceptor cell function. The ninaC proteins combines putative serine/threonine-protein kinase and myosin activities. Essential for the expression and stability of the rtp protein in the photoreceptors. The rtp/ninaC complex is required for stability of inad and inac and the normal termination of phototransduction in the retina. The sequence is that of Neither inactivation nor afterpotential protein C (ninaC) from Drosophila melanogaster (Fruit fly).